Consider the following 97-residue polypeptide: Co-chaperonin GroES (97 aa).

This sequence belongs to the GroES chaperonin family. In terms of assembly, heptamer of 7 subunits arranged in a ring. Interacts with the chaperonin GroEL.

It is found in the cytoplasm. In terms of biological role, together with the chaperonin GroEL, plays an essential role in assisting protein folding. The GroEL-GroES system forms a nano-cage that allows encapsulation of the non-native substrate proteins and provides a physical environment optimized to promote and accelerate protein folding. GroES binds to the apical surface of the GroEL ring, thereby capping the opening of the GroEL channel. This is Co-chaperonin GroES from Escherichia fergusonii (strain ATCC 35469 / DSM 13698 / CCUG 18766 / IAM 14443 / JCM 21226 / LMG 7866 / NBRC 102419 / NCTC 12128 / CDC 0568-73).